A 394-amino-acid polypeptide reads, in one-letter code: MSKEKFERTKPHVNVGTIGHVDHGKTTLTAAITTVLAKTYGGSARAFDQIDNAPEEKARGITINTSHVEYDTPTRHYAHVDCPGHADYVKNMITGAAQMDGAILVVAATDGPMPQTREHILLGRQVGVPYIIVFLNKCDMVDDEELLELVEMEVRELLSQYDFPGDDTPIVRGSALKALEGDAEWEAKIIELAGHLDTYIPEPERAIDKPFLLPIEDVFSISGRGTVVTGRVERGIIKVGEEVEIVGIKETAKTTCTGVEMFRKLLDEGRAGENVGVLLRGIKREEIERGQVLAKPGTINPHTKFESEVYILSKDEGGRHTPFFKGYRPQFYFRTTDVTGTIELPEGVEMVMPGDNIKMVVTLIHPIAMDDGLRFAIREGGRTVGAGVVAKVLG.

Positions 10-204 (KPHVNVGTIG…HLDTYIPEPE (195 aa)) constitute a tr-type G domain. Residues 19-26 (GHVDHGKT) form a G1 region. A GTP-binding site is contributed by 19-26 (GHVDHGKT). Position 26 (T26) interacts with Mg(2+). The segment at 60-64 (GITIN) is G2. The tract at residues 81-84 (DCPG) is G3. GTP contacts are provided by residues 81-85 (DCPGH) and 136-139 (NKCD). Residues 136–139 (NKCD) form a G4 region. Residues 174–176 (SAL) are G5.

The protein belongs to the TRAFAC class translation factor GTPase superfamily. Classic translation factor GTPase family. EF-Tu/EF-1A subfamily. Monomer.

The protein resides in the cytoplasm. It carries out the reaction GTP + H2O = GDP + phosphate + H(+). Its function is as follows. GTP hydrolase that promotes the GTP-dependent binding of aminoacyl-tRNA to the A-site of ribosomes during protein biosynthesis. This Klebsiella pneumoniae subsp. pneumoniae (strain ATCC 700721 / MGH 78578) protein is Elongation factor Tu.